Here is a 96-residue protein sequence, read N- to C-terminus: NADH-ubiquinone oxidoreductase chain 6 (96 aa).

2 consecutive transmembrane segments (helical) span residues 24–44 (MSLL…LGSI) and 48–68 (WFAY…FIYV).

Belongs to the complex I subunit 6 family.

It localises to the mitochondrion membrane. The enzyme catalyses a ubiquinone + NADH + 5 H(+)(in) = a ubiquinol + NAD(+) + 4 H(+)(out). In terms of biological role, core subunit of the mitochondrial membrane respiratory chain NADH dehydrogenase (Complex I) that is believed to belong to the minimal assembly required for catalysis. Complex I functions in the transfer of electrons from NADH to the respiratory chain. The immediate electron acceptor for the enzyme is believed to be ubiquinone. This is NADH-ubiquinone oxidoreductase chain 6 (ND6) from Albinaria turrita (Door snail).